Reading from the N-terminus, the 470-residue chain is Shutoff alkaline exonuclease (470 aa).

Belongs to the herpesviridae alkaline nuclease family. In terms of assembly, forms a complex with the DNA polymerase, the DNA polymerase processivity factor, and the major DNA binding protein.

It localises to the host nucleus. The protein localises to the host cytoplasm. Plays a role in processing non linear or branched viral DNA intermediates in order to promote the production of mature packaged unit-length linear progeny viral DNA molecules. Exhibits endonuclease and exonuclease activities and accepts both double-stranded and single-stranded DNA as substrate. Exonuclease digestion of DNA is in the 5'-&gt; 3' direction and the products are 5'-monophosphate nucleosides. Additionally, forms a recombinase with the major DNA-binding protein, which displays strand exchange activity. Also acts as a cytoplasmic RNA endonuclease that induces degradation of the majority of the cellular messenger RNAs during early lytic infection. The resulting inhibition of cellular protein synthesis serves to ensure maximal viral gene expression and evasion from host immune response. Internally cleaves host mRNAs which are then degraded by the cellular exonuclease XRN1. Bypasses therefore the regulatory steps of deadenylation and decapping normally required for XRN1 activation. In Epstein-Barr virus (strain GD1) (HHV-4), this protein is Shutoff alkaline exonuclease.